Reading from the N-terminus, the 597-residue chain is Intrastrand cross-link recognition protein (597 aa).

Polar residues predominate over residues 1-28 (MNTGISPKQDDASNSNLLNIGQDHSLQY). Disordered regions lie at residues 1-134 (MNTG…NVNA), 174-212 (QTNP…LAAS), 259-291 (SAGN…QQQM), and 327-364 (HLQQ…PKRP). Over residues 32 to 42 (EHNDSQYRDAS) the composition is skewed to basic and acidic residues. Composition is skewed to low complexity over residues 52–134 (QFQA…NVNA), 178–212 (SVTG…LAAS), 260–271 (AGNAAGNANTAT), 281–291 (QPQLTHHQQQM), and 327–337 (HLQQQQQQQQH). Positions 351–361 (ERRKQLKKQGP) are enriched in basic residues. 2 DNA-binding regions (HMG box) span residues 361–429 (PKRP…DAYE) and 434–502 (PKRP…PDEN). Serine 532 is modified (phosphoserine). Low complexity-rich tracts occupy residues 543–556 (SVTG…NPNT) and 564–580 (LQQQ…QQQQ). A disordered region spans residues 543–597 (SVTGSNSNSTNPNTPVSPPISLQQQPLQQQQQQQQQQQHMLLADPTTNGSIIKNE). Residues 587 to 597 (PTTNGSIIKNE) are compositionally biased toward polar residues.

The protein resides in the nucleus. Functionally, binds to platinated DNA and confers sensitivity to the anticancer drug cisplatin. Activate the expression of the COX5B gene. The protein is Intrastrand cross-link recognition protein (IXR1) of Saccharomyces cerevisiae (strain ATCC 204508 / S288c) (Baker's yeast).